The following is a 367-amino-acid chain: Queuine tRNA-ribosyltransferase (367 aa).

Residue D92 is the Proton acceptor of the active site. Substrate-binding positions include 92-96 (DSGGF), D146, Q188, and G215. The interval 246-252 (GVGTPKD) is RNA binding. D265 acts as the Nucleophile in catalysis. C303, C305, C308, and H334 together coordinate Zn(2+).

The protein belongs to the queuine tRNA-ribosyltransferase family. In terms of assembly, homodimer. Within each dimer, one monomer is responsible for RNA recognition and catalysis, while the other monomer binds to the replacement base PreQ1. It depends on Zn(2+) as a cofactor.

The catalysed reaction is 7-aminomethyl-7-carbaguanine + guanosine(34) in tRNA = 7-aminomethyl-7-carbaguanosine(34) in tRNA + guanine. Its pathway is tRNA modification; tRNA-queuosine biosynthesis. Its function is as follows. Catalyzes the base-exchange of a guanine (G) residue with the queuine precursor 7-aminomethyl-7-deazaguanine (PreQ1) at position 34 (anticodon wobble position) in tRNAs with GU(N) anticodons (tRNA-Asp, -Asn, -His and -Tyr). Catalysis occurs through a double-displacement mechanism. The nucleophile active site attacks the C1' of nucleotide 34 to detach the guanine base from the RNA, forming a covalent enzyme-RNA intermediate. The proton acceptor active site deprotonates the incoming PreQ1, allowing a nucleophilic attack on the C1' of the ribose to form the product. After dissociation, two additional enzymatic reactions on the tRNA convert PreQ1 to queuine (Q), resulting in the hypermodified nucleoside queuosine (7-(((4,5-cis-dihydroxy-2-cyclopenten-1-yl)amino)methyl)-7-deazaguanosine). This chain is Queuine tRNA-ribosyltransferase, found in Francisella tularensis subsp. mediasiatica (strain FSC147).